Reading from the N-terminus, the 612-residue chain is T-cell immunomodulatory protein (612 aa).

Residues 1–33 form the signal peptide; sequence MAAAGRLPSSWALFSPLLAGLALLGVGPVPARA. Residues asparagine 36, asparagine 95, asparagine 139, asparagine 146, asparagine 151, asparagine 176, asparagine 188, asparagine 226, and asparagine 243 are each glycosylated (N-linked (GlcNAc...) asparagine). The FG-GAP; atypical repeat unit spans residues 258–293; the sequence is VVGQSAFADFDGDGHMDHLLPGCEDKNCQKSTIYLV. 3 N-linked (GlcNAc...) asparagine glycosylation sites follow: asparagine 353, asparagine 371, and asparagine 482. Residues 567-587 traverse the membrane as a helical segment; the sequence is VLLTAIALIGVCVFILAIIGI.

This sequence belongs to the TIP family. Interacts with RUVBL1, RUVBL2 and alpha-tubulin. In terms of tissue distribution, ubiquitously expressed.

It localises to the secreted. Its subcellular location is the membrane. In terms of biological role, modulator of T-cell function. Has a protective effect in graft versus host disease model. The protein is T-cell immunomodulatory protein of Homo sapiens (Human).